The primary structure comprises 481 residues: Glutamate mutase epsilon subunit (481 aa).

Arg67 contacts L-glutamate. Residue Gly69 participates in adenosylcob(III)alamin binding. Arg99 provides a ligand contact to L-glutamate. Asn122 is an adenosylcob(III)alamin binding site. L-glutamate-binding positions include 148-149, Glu170, and Tyr176; that span reads RH. Residue Pro179 participates in adenosylcob(III)alamin binding. Tyr180 is a binding site for L-glutamate. Adenosylcob(III)alamin contacts are provided by Phe296, Lys325, Glu329, and Ile333.

The protein belongs to the methylaspartate mutase GlmE subunit family. As to quaternary structure, heterotetramer composed of 2 epsilon subunits (GlmE) and 2 sigma subunits (GlmS). GlmE exists as a homodimer and GlmS as a monomer. It depends on adenosylcob(III)alamin as a cofactor.

The enzyme catalyses (2S,3S)-3-methyl-L-aspartate = L-glutamate. Its pathway is amino-acid degradation; L-glutamate degradation via mesaconate pathway; acetate and pyruvate from L-glutamate: step 1/4. Functionally, catalyzes the carbon skeleton rearrangement of L-glutamate to L-threo-3-methylaspartate ((2S,3S)-3-methylaspartate). The polypeptide is Glutamate mutase epsilon subunit (Yersinia enterocolitica serotype O:8 / biotype 1B (strain NCTC 13174 / 8081)).